A 443-amino-acid polypeptide reads, in one-letter code: 3-phosphoshikimate 1-carboxyvinyltransferase (443 aa).

The segment at 1-25 is disordered; the sequence is MSHSAEPLPMTARRSGPLTGEAQVP. 3-phosphoshikimate contacts are provided by Lys-28, Ser-29, and Arg-33. Lys-28 provides a ligand contact to phosphoenolpyruvate. Residues Gly-101 and Arg-129 each coordinate phosphoenolpyruvate. The 3-phosphoshikimate site is built by Ser-174, Gln-176, Asp-326, and Lys-353. Gln-176 is a binding site for phosphoenolpyruvate. Asp-326 serves as the catalytic Proton acceptor. Phosphoenolpyruvate is bound by residues Arg-357 and Arg-400.

This sequence belongs to the EPSP synthase family. In terms of assembly, monomer.

The protein resides in the cytoplasm. The catalysed reaction is 3-phosphoshikimate + phosphoenolpyruvate = 5-O-(1-carboxyvinyl)-3-phosphoshikimate + phosphate. It participates in metabolic intermediate biosynthesis; chorismate biosynthesis; chorismate from D-erythrose 4-phosphate and phosphoenolpyruvate: step 6/7. In terms of biological role, catalyzes the transfer of the enolpyruvyl moiety of phosphoenolpyruvate (PEP) to the 5-hydroxyl of shikimate-3-phosphate (S3P) to produce enolpyruvyl shikimate-3-phosphate and inorganic phosphate. The chain is 3-phosphoshikimate 1-carboxyvinyltransferase from Paracoccus denitrificans (strain Pd 1222).